The primary structure comprises 129 residues: uncharacterized protein (129 aa).

One can recognise an HIT domain in the interval 3–109 (IFCKIINGEI…IPRYEGDGEV (107 aa)). The Histidine triad motif motif lies at 94-98 (HVHFH).

This is an uncharacterized protein from Methanocaldococcus jannaschii (strain ATCC 43067 / DSM 2661 / JAL-1 / JCM 10045 / NBRC 100440) (Methanococcus jannaschii).